The chain runs to 224 residues: tRNA (guanine-N(7)-)-methyltransferase (224 aa).

S-adenosyl-L-methionine contacts are provided by Glu-54, Glu-79, Glu-106, and Asp-129. Asp-129 is a catalytic residue. Residues Lys-133 and Asp-165 each contribute to the substrate site.

This sequence belongs to the class I-like SAM-binding methyltransferase superfamily. TrmB family.

It carries out the reaction guanosine(46) in tRNA + S-adenosyl-L-methionine = N(7)-methylguanosine(46) in tRNA + S-adenosyl-L-homocysteine. It functions in the pathway tRNA modification; N(7)-methylguanine-tRNA biosynthesis. Catalyzes the formation of N(7)-methylguanine at position 46 (m7G46) in tRNA. This chain is tRNA (guanine-N(7)-)-methyltransferase, found in Chlamydia caviae (strain ATCC VR-813 / DSM 19441 / 03DC25 / GPIC) (Chlamydophila caviae).